The primary structure comprises 798 residues: Nucleolin homolog 1 (798 aa).

Positions 1 to 548 are disordered; sequence MGFDSPRGRG…IISEEERRRQ (548 aa). The span at 8 to 34 shows a compositional bias: gly residues; it reads GRGGGGFRGGRGGGSGFTPRGGGGGFR. Basic and acidic residues-rich tracts occupy residues 59-75, 88-98, and 106-116; these read GGDR…DREG, GGDRGGFRGGD, and GGDRGNFRGGD. 2 stretches are compositionally biased toward gly residues: residues 150 to 164 and 171 to 184; these read RGGG…GRGG and GGRG…GGSR. Acidic residues-rich tracts occupy residues 196-205, 226-242, 258-278, and 287-317; these read SDGDDDEEEE, DDSG…DEEP, EDSD…DDDA, and VEED…EETE. Polar residues predominate over residues 328-350; that stretch reads SLKSVDSTKGKQVNLSKVATPTT. Composition is skewed to acidic residues over residues 378–404 and 424–450; these read DDDS…EEED and IEED…EEDT. Low complexity predominate over residues 467–476; that stretch reads AANRAAASAA. Acidic residues predominate over residues 478 to 504; that stretch reads DSDEDEDEEDEEDVEEEDEEEEEEEDI. A compositionally biased stretch (basic and acidic residues) spans 532–548; the sequence is VKSDGKSIISEEERRRQ. In terms of domain architecture, RRM spans 638 to 713; that stretch reads LQLFINALPG…HLVDVFYARH (76 aa). Positions 736–798 are disordered; that stretch reads PKVAADSSGD…FKKTGFKGKK (63 aa). A compositionally biased stretch (acidic residues) spans 743-762; it reads SGDDSEEVASSDEGIQEVEE. Residues 783–798 are compositionally biased toward basic residues; it reads QQKKPQFKKTGFKGKK.

Identified in an mRNP granule complex containing untranslated mRNAs.

Its subcellular location is the nucleus. It is found in the nucleolus. Functionally, nucleolin is the major nucleolar protein of growing eukaryotic cells. It is found associated with intranucleolar chromatin and pre-ribosomal particles. It induces chromatin decondensation by binding to histone H1. It is thought to play a role in pre-rRNA transcription and ribosome assembly. May play a role in the process of transcriptional elongation. Involved in phase separation into sub-nucleolar condensates. In Caenorhabditis elegans, this protein is Nucleolin homolog 1.